A 352-amino-acid chain; its full sequence is Dihydroorotate dehydrogenase (quinone) (352 aa).

FMN is bound by residues 68–72 (AGFDK) and Thr92. A substrate-binding site is contributed by Lys72. 117–121 (NAMGF) is a substrate binding site. The FMN site is built by Asn146 and Asn179. Residue Asn179 participates in substrate binding. The Nucleophile role is filled by Ser182. A substrate-binding site is contributed by Asn184. The FMN site is built by Lys215 and Thr243. 244-245 (NT) serves as a coordination point for substrate. Residues Gly263, Gly292, and 313 to 314 (YS) contribute to the FMN site.

Belongs to the dihydroorotate dehydrogenase family. Type 2 subfamily. Monomer. Requires FMN as cofactor.

The protein localises to the cell membrane. It catalyses the reaction (S)-dihydroorotate + a quinone = orotate + a quinol. The protein operates within pyrimidine metabolism; UMP biosynthesis via de novo pathway; orotate from (S)-dihydroorotate (quinone route): step 1/1. Its function is as follows. Catalyzes the conversion of dihydroorotate to orotate with quinone as electron acceptor. The protein is Dihydroorotate dehydrogenase (quinone) of Sulfurimonas denitrificans (strain ATCC 33889 / DSM 1251) (Thiomicrospira denitrificans (strain ATCC 33889 / DSM 1251)).